The chain runs to 64 residues: Large ribosomal subunit protein uL30 (64 aa).

In terms of assembly, part of the 50S ribosomal subunit. Post-translationally, the protein is methylated on either Ala-2 or Lys-3.

This Rhodopseudomonas palustris (strain ATCC BAA-98 / CGA009) protein is Large ribosomal subunit protein uL30.